Consider the following 357-residue polypeptide: Nicotinate-nucleotide--dimethylbenzimidazole phosphoribosyltransferase (357 aa).

Glutamate 323 functions as the Proton acceptor in the catalytic mechanism.

This sequence belongs to the CobT family.

The catalysed reaction is 5,6-dimethylbenzimidazole + nicotinate beta-D-ribonucleotide = alpha-ribazole 5'-phosphate + nicotinate + H(+). It participates in nucleoside biosynthesis; alpha-ribazole biosynthesis; alpha-ribazole from 5,6-dimethylbenzimidazole: step 1/2. In terms of biological role, catalyzes the synthesis of alpha-ribazole-5'-phosphate from nicotinate mononucleotide (NAMN) and 5,6-dimethylbenzimidazole (DMB). The protein is Nicotinate-nucleotide--dimethylbenzimidazole phosphoribosyltransferase of Nitratidesulfovibrio vulgaris (strain DP4) (Desulfovibrio vulgaris).